Consider the following 71-residue polypeptide: Protein PSY3 (71 aa).

An N-terminal signal peptide occupies residues 1–25 (MGYSSSSRIGLCLFLFFTFALLSSA). Positions 26–49 (RISLSFSENEMTVVPERSLMVSTN) are excised as a propeptide. Residues 47-71 (STNDYSDPTANGRHDPPRGGRGRRR) are disordered. Tyrosine 51 is modified (sulfotyrosine). Proline 63 bears the 4-hydroxyproline mark. An O-linked (Ara...) hydroxyproline glycan is attached at proline 63. Residues 66 to 71 (GRGRRR) constitute a propeptide that is removed on maturation.

Belongs to the sulfated-peptide plant hormone family. Post-translationally, the sulfation and the glycosylation are required for full activity.

The protein resides in the secreted. In terms of biological role, promotes cellular proliferation and expansion. The sequence is that of Protein PSY3 (PSY3) from Arabidopsis thaliana (Mouse-ear cress).